Consider the following 208-residue polypeptide: Ribosomal RNA small subunit methyltransferase G (208 aa).

S-adenosyl-L-methionine contacts are provided by residues glycine 76, leucine 81, 127–128 (VE), and arginine 142.

Belongs to the methyltransferase superfamily. RNA methyltransferase RsmG family.

It is found in the cytoplasm. It carries out the reaction guanosine(527) in 16S rRNA + S-adenosyl-L-methionine = N(7)-methylguanosine(527) in 16S rRNA + S-adenosyl-L-homocysteine. Specifically methylates the N7 position of guanine in position 527 of 16S rRNA. This Legionella pneumophila subsp. pneumophila (strain Philadelphia 1 / ATCC 33152 / DSM 7513) protein is Ribosomal RNA small subunit methyltransferase G.